Reading from the N-terminus, the 644-residue chain is Chaperone protein HtpG (644 aa).

Residues 1 to 352 (MNARVEQLEF…AQDMSLNVSR (352 aa)) form an a; substrate-binding region. The tract at residues 353 to 566 (EILQQDRQIK…AFGITPALAR (214 aa)) is b. A c region spans residues 567–644 (LYRASGQDIP…ILADRLARTL (78 aa)).

This sequence belongs to the heat shock protein 90 family. In terms of assembly, homodimer.

The protein resides in the cytoplasm. Its function is as follows. Molecular chaperone. Has ATPase activity. The sequence is that of Chaperone protein HtpG from Mycolicibacterium paratuberculosis (strain ATCC BAA-968 / K-10) (Mycobacterium paratuberculosis).